The primary structure comprises 486 residues: Serine/threonine-protein kinase 4 (486 aa).

The Protein kinase domain maps to 29–280; it reads FDVLEKLGEG…AIQLLQHPFV (252 aa). Residues 35–43 and Lys58 contribute to the ATP site; that span reads LGEGSYGSV. Residue Asp148 is the Proton acceptor of the active site. A Phosphothreonine; by autocatalysis modification is found at Thr182. The stretch at 288–324 forms a coiled coil; the sequence is ILRDLINEAMDIKLKRQEAQQRELDQEDEENSEEDET. The tract at residues 305-332 is disordered; that stretch reads EAQQRELDQEDEENSEEDETDSGTMVRA. Acidic residues predominate over residues 312–325; the sequence is DQEDEENSEEDETD. Positions 432-479 constitute an SARAH domain; it reads YEFLKTWSVDELQRRLSALDPMMEQEIEEIRQKYQSKRQPILDAIEAK.

This sequence belongs to the protein kinase superfamily. STE Ser/Thr protein kinase family. STE20 subfamily. As to quaternary structure, homodimer; mediated via the coiled-coil region. Requires Mg(2+) as cofactor. Post-translationally, proteolytically cleaved by caspase-3 during apoptosis at Asp-325 resulting in a 37 kDa form. Proteolytic cleavage results in kinase activation and nuclear translocation of the truncated form (MST1/N).

The protein resides in the cytoplasm. It is found in the nucleus. The catalysed reaction is L-seryl-[protein] + ATP = O-phospho-L-seryl-[protein] + ADP + H(+). It carries out the reaction L-threonyl-[protein] + ATP = O-phospho-L-threonyl-[protein] + ADP + H(+). With respect to regulation, the C-terminal non-catalytic region inhibits the kinase activity, the enzyme is activated by caspase-cleavage. Homodimerization and autophosphorylation of Thr-182 is also required for full activation. Functionally, stress-activated, pro-apoptotic kinase which, following caspase-cleavage, enters the nucleus and induces chromatin condensation followed by internucleosomal DNA fragmentation. Key component of the Hippo signaling pathway which plays a pivotal role in organ size control and tumor suppression by restricting proliferation and promoting apoptosis. The core of this pathway is composed of a kinase cascade wherein STK3/MST2 and STK4/MST1, in complex with its regulatory protein SAV1, phosphorylates and activates LATS1/2 in complex with its regulatory protein MOB1, which in turn phosphorylates and inactivates YAP1 oncoprotein and WWTR1/TAZ. Phosphorylation of YAP1 by LATS2 inhibits its translocation into the nucleus to regulate cellular genes important for cell proliferation, cell death, and cell migration. Phosphorylates 'Ser-14' of histone H2B (H2BS14ph) during apoptosis. Phosphorylates FOXO3 upon oxidative stress, which results in its nuclear translocation and cell death initiation. The protein is Serine/threonine-protein kinase 4 (STK4) of Gallus gallus (Chicken).